The following is a 213-amino-acid chain: High frequency lysogenization protein HflD homolog (213 aa).

Residues 79–122 adopt a coiled-coil conformation; that stretch reads QGLNAELTRYTLSLMVLERKLSSAKGALNTLGDRINGLQRQLDH.

This sequence belongs to the HflD family.

It localises to the cytoplasm. It is found in the cell inner membrane. The sequence is that of High frequency lysogenization protein HflD homolog from Salmonella agona (strain SL483).